We begin with the raw amino-acid sequence, 810 residues long: Lon protease (810 aa).

In terms of domain architecture, Lon N-terminal spans 32-226; sequence LPAIAMRSNM…RILDILARET (195 aa). 376–383 serves as a coordination point for ATP; it reads GPPGVGKT. The Lon proteolytic domain occupies 612–791; it reads KPMIGVTTGL…EEVLEVALNE (180 aa). Active-site residues include S697 and K740.

This sequence belongs to the peptidase S16 family. Homohexamer. Organized in a ring with a central cavity.

It is found in the cytoplasm. The enzyme catalyses Hydrolysis of proteins in presence of ATP.. Its function is as follows. ATP-dependent serine protease that mediates the selective degradation of mutant and abnormal proteins as well as certain short-lived regulatory proteins. Required for cellular homeostasis and for survival from DNA damage and developmental changes induced by stress. Degrades polypeptides processively to yield small peptide fragments that are 5 to 10 amino acids long. Binds to DNA in a double-stranded, site-specific manner. This Fervidobacterium nodosum (strain ATCC 35602 / DSM 5306 / Rt17-B1) protein is Lon protease.